The sequence spans 93 residues: Putative pterin-4-alpha-carbinolamine dehydratase (93 aa).

This sequence belongs to the pterin-4-alpha-carbinolamine dehydratase family.

The catalysed reaction is (4aS,6R)-4a-hydroxy-L-erythro-5,6,7,8-tetrahydrobiopterin = (6R)-L-erythro-6,7-dihydrobiopterin + H2O. The sequence is that of Putative pterin-4-alpha-carbinolamine dehydratase from Nostoc sp. (strain PCC 7120 / SAG 25.82 / UTEX 2576).